The chain runs to 154 residues: Protein-export protein SecB (154 aa).

Belongs to the SecB family. In terms of assembly, homotetramer, a dimer of dimers. One homotetramer interacts with 1 SecA dimer.

The protein localises to the cytoplasm. In terms of biological role, one of the proteins required for the normal export of preproteins out of the cell cytoplasm. It is a molecular chaperone that binds to a subset of precursor proteins, maintaining them in a translocation-competent state. It also specifically binds to its receptor SecA. This chain is Protein-export protein SecB, found in Vibrio parahaemolyticus serotype O3:K6 (strain RIMD 2210633).